The chain runs to 244 residues: ATP synthase subunit a (244 aa).

Helical transmembrane passes span 17 to 37 (LSNV…AVLT), 74 to 94 (PFLA…MLGL), 112 to 132 (DPAI…YYGV), 148 to 168 (IPLL…TLGL), 171 to 191 (YGNI…ATNF), 196 to 216 (IALG…WQAF), and 217 to 237 (SLFV…VYIS).

The protein belongs to the ATPase A chain family. F-type ATPases have 2 components, CF(1) - the catalytic core - and CF(0) - the membrane proton channel. CF(1) has five subunits: alpha(3), beta(3), gamma(1), delta(1), epsilon(1). CF(0) has three main subunits: a(1), b(2) and c(9-12). The alpha and beta chains form an alternating ring which encloses part of the gamma chain. CF(1) is attached to CF(0) by a central stalk formed by the gamma and epsilon chains, while a peripheral stalk is formed by the delta and b chains.

Its subcellular location is the cell membrane. In terms of biological role, key component of the proton channel; it plays a direct role in the translocation of protons across the membrane. This Bacillus pumilus (strain SAFR-032) protein is ATP synthase subunit a.